Reading from the N-terminus, the 126-residue chain is Holo-[acyl-carrier-protein] synthase (126 aa).

Asp-8 and Glu-57 together coordinate Mg(2+).

The protein belongs to the P-Pant transferase superfamily. AcpS family. It depends on Mg(2+) as a cofactor.

Its subcellular location is the cytoplasm. It carries out the reaction apo-[ACP] + CoA = holo-[ACP] + adenosine 3',5'-bisphosphate + H(+). Its function is as follows. Transfers the 4'-phosphopantetheine moiety from coenzyme A to a Ser of acyl-carrier-protein. This is Holo-[acyl-carrier-protein] synthase from Trichlorobacter lovleyi (strain ATCC BAA-1151 / DSM 17278 / SZ) (Geobacter lovleyi).